Reading from the N-terminus, the 426-residue chain is UDP-N-acetylglucosamine 1-carboxyvinyltransferase (426 aa).

Phosphoenolpyruvate is bound at residue 22 to 23; that stretch reads KN. Residue arginine 93 participates in UDP-N-acetyl-alpha-D-glucosamine binding. Catalysis depends on cysteine 117, which acts as the Proton donor. Residue cysteine 117 is modified to 2-(S-cysteinyl)pyruvic acid O-phosphothioketal. UDP-N-acetyl-alpha-D-glucosamine contacts are provided by residues 162 to 165, aspartate 307, and isoleucine 329; that span reads KVSV.

This sequence belongs to the EPSP synthase family. MurA subfamily.

Its subcellular location is the cytoplasm. The enzyme catalyses phosphoenolpyruvate + UDP-N-acetyl-alpha-D-glucosamine = UDP-N-acetyl-3-O-(1-carboxyvinyl)-alpha-D-glucosamine + phosphate. It functions in the pathway cell wall biogenesis; peptidoglycan biosynthesis. Cell wall formation. Adds enolpyruvyl to UDP-N-acetylglucosamine. The polypeptide is UDP-N-acetylglucosamine 1-carboxyvinyltransferase (Haemophilus ducreyi (strain 35000HP / ATCC 700724)).